A 223-amino-acid polypeptide reads, in one-letter code: Ribose-5-phosphate isomerase A (223 aa).

Substrate-binding positions include 28–31 (TGST), 81–84 (DGAD), and 94–97 (KGGG). E103 serves as the catalytic Proton acceptor. K121 serves as a coordination point for substrate.

This sequence belongs to the ribose 5-phosphate isomerase family. Homodimer.

The catalysed reaction is aldehydo-D-ribose 5-phosphate = D-ribulose 5-phosphate. It participates in carbohydrate degradation; pentose phosphate pathway; D-ribose 5-phosphate from D-ribulose 5-phosphate (non-oxidative stage): step 1/1. Its function is as follows. Catalyzes the reversible conversion of ribose-5-phosphate to ribulose 5-phosphate. The chain is Ribose-5-phosphate isomerase A from Ruthia magnifica subsp. Calyptogena magnifica.